The sequence spans 419 residues: Imidazolonepropionase (419 aa).

His84 and His86 together coordinate Fe(3+). Residues His84 and His86 each contribute to the Zn(2+) site. 4-imidazolone-5-propanoate is bound by residues Arg93, Tyr156, and His189. N-formimidoyl-L-glutamate is bound at residue Tyr156. His254 lines the Fe(3+) pocket. A Zn(2+)-binding site is contributed by His254. Residue Gln257 participates in 4-imidazolone-5-propanoate binding. Asp329 contacts Fe(3+). Residue Asp329 participates in Zn(2+) binding. Asn331 and Gly333 together coordinate N-formimidoyl-L-glutamate. Thr334 contributes to the 4-imidazolone-5-propanoate binding site.

It belongs to the metallo-dependent hydrolases superfamily. HutI family. In terms of assembly, monomer. Forms a tightly packed homodimer in the crystal, but this seems to be an artifact of crystallization. The cofactor is Zn(2+). It depends on Fe(3+) as a cofactor.

The protein resides in the cytoplasm. It carries out the reaction 4-imidazolone-5-propanoate + H2O = N-formimidoyl-L-glutamate. It participates in amino-acid degradation; L-histidine degradation into L-glutamate; N-formimidoyl-L-glutamate from L-histidine: step 3/3. Functionally, catalyzes the hydrolytic cleavage of the carbon-nitrogen bond in imidazolone-5-propanoate to yield N-formimidoyl-L-glutamate. It is the third step in the universal histidine degradation pathway. In Agrobacterium fabrum (strain C58 / ATCC 33970) (Agrobacterium tumefaciens (strain C58)), this protein is Imidazolonepropionase.